Here is a 502-residue protein sequence, read N- to C-terminus: Nondiscriminating glutamyl-tRNA synthetase EARS2, mitochondrial (502 aa).

Residues 1–20 constitute a mitochondrion transit peptide; sequence MAGMLREVCGAAASGLRVRF. L-glutamate is bound at residue 19-21; the sequence is RFG. Residues 24–32 carry the 'HIGH' region motif; the sequence is PTGFLHLGG. His29 lines the ATP pocket. L-glutamate is bound by residues Glu55, 207 to 211, and Arg225; that span reads YHLAN. Residues Glu228 and 263–267 contribute to the ATP site; that span reads KLSKR. Residues 263–267 carry the 'KMSKS' region motif; that stretch reads KLSKR.

It belongs to the class-I aminoacyl-tRNA synthetase family. Glutamate--tRNA ligase type 1 subfamily.

It localises to the mitochondrion matrix. It catalyses the reaction tRNA(Glx) + L-glutamate + ATP = L-glutamyl-tRNA(Glx) + AMP + diphosphate. The enzyme catalyses tRNA(Glu) + L-glutamate + ATP = L-glutamyl-tRNA(Glu) + AMP + diphosphate. It carries out the reaction tRNA(Gln) + L-glutamate + ATP = L-glutamyl-tRNA(Gln) + AMP + diphosphate. In terms of biological role, non-discriminating glutamyl-tRNA synthetase that catalyzes aminoacylation of both mitochondrial tRNA(Glu) and tRNA(Gln) and participates in RNA aminoacylation for mitochondrial protein translation. Attachs glutamate to tRNA(Glu) or tRNA(Gln) in a two-step reaction: glutamate is first activated by ATP to form Glu-AMP and then transferred to the acceptor end of tRNA(Glu) or tRNA(Gln). This Gallus gallus (Chicken) protein is Nondiscriminating glutamyl-tRNA synthetase EARS2, mitochondrial.